The chain runs to 210 residues: uncharacterized protein (210 aa).

This is an uncharacterized protein from Sulfolobus islandicus filamentous virus (isolate Iceland/Hveragerdi) (SIFV).